Consider the following 1076-residue polypeptide: Carbamoyl phosphate synthase large chain (1076 aa).

Positions 1–403 (MPKRTDIQSI…SLQKALRGLE (403 aa)) are carboxyphosphate synthetic domain. Residues arginine 129, arginine 169, glycine 175, glycine 176, glutamate 208, leucine 210, glutamate 215, glycine 241, isoleucine 242, histidine 243, glutamine 285, and glutamate 299 each coordinate ATP. The ATP-grasp 1 domain maps to 133 to 328 (DKAMKSIGLE…IAKVAAKLAV (196 aa)). Mg(2+)-binding residues include glutamine 285, glutamate 299, and asparagine 301. Mn(2+)-binding residues include glutamine 285, glutamate 299, and asparagine 301. Residues 404 to 553 (VGAAGLDEKV…YSTYDEECEA (150 aa)) are oligomerization domain. Residues 554–935 (NPTDKDKIMV…AYAKAELGCG (382 aa)) are carbamoyl phosphate synthetic domain. In terms of domain architecture, ATP-grasp 2 spans 678–869 (QQAVQRLGLK…LAKIAARVMV (192 aa)). Arginine 714, arginine 753, leucine 755, glutamate 760, glycine 785, valine 786, histidine 787, serine 788, glutamine 828, and glutamate 840 together coordinate ATP. Mg(2+) contacts are provided by glutamine 828, glutamate 840, and asparagine 842. Mn(2+)-binding residues include glutamine 828, glutamate 840, and asparagine 842. Residues 936-1076 (SVYPEGGRAL…LHARVKANQA (141 aa)) form the MGS-like domain. An allosteric domain region spans residues 936-1076 (SVYPEGGRAL…LHARVKANQA (141 aa)).

This sequence belongs to the CarB family. Composed of two chains; the small (or glutamine) chain promotes the hydrolysis of glutamine to ammonia, which is used by the large (or ammonia) chain to synthesize carbamoyl phosphate. Tetramer of heterodimers (alpha,beta)4. The cofactor is Mg(2+). Requires Mn(2+) as cofactor.

The catalysed reaction is hydrogencarbonate + L-glutamine + 2 ATP + H2O = carbamoyl phosphate + L-glutamate + 2 ADP + phosphate + 2 H(+). The enzyme catalyses hydrogencarbonate + NH4(+) + 2 ATP = carbamoyl phosphate + 2 ADP + phosphate + 2 H(+). Its pathway is amino-acid biosynthesis; L-arginine biosynthesis; carbamoyl phosphate from bicarbonate: step 1/1. It functions in the pathway pyrimidine metabolism; UMP biosynthesis via de novo pathway; (S)-dihydroorotate from bicarbonate: step 1/3. Functionally, large subunit of the glutamine-dependent carbamoyl phosphate synthetase (CPSase). CPSase catalyzes the formation of carbamoyl phosphate from the ammonia moiety of glutamine, carbonate, and phosphate donated by ATP, constituting the first step of 2 biosynthetic pathways, one leading to arginine and/or urea and the other to pyrimidine nucleotides. The large subunit (synthetase) binds the substrates ammonia (free or transferred from glutamine from the small subunit), hydrogencarbonate and ATP and carries out an ATP-coupled ligase reaction, activating hydrogencarbonate by forming carboxy phosphate which reacts with ammonia to form carbamoyl phosphate. The polypeptide is Carbamoyl phosphate synthase large chain (Vibrio cholerae serotype O1 (strain ATCC 39315 / El Tor Inaba N16961)).